We begin with the raw amino-acid sequence, 261 residues long: Potassium/proton antiporter CemA (261 aa).

2 consecutive transmembrane segments (helical) span residues 47 to 67 (FLVF…GPWV) and 138 to 158 (IISH…YFIM).

This sequence belongs to the CemA family.

The protein localises to the plastid. It localises to the chloroplast inner membrane. The catalysed reaction is K(+)(in) + H(+)(out) = K(+)(out) + H(+)(in). Its function is as follows. Contributes to K(+)/H(+) antiport activity by supporting proton efflux to control proton extrusion and homeostasis in chloroplasts in a light-dependent manner to modulate photosynthesis. Prevents excessive induction of non-photochemical quenching (NPQ) under continuous-light conditions. Indirectly promotes efficient inorganic carbon uptake into chloroplasts. The chain is Potassium/proton antiporter CemA from Ginkgo biloba (Ginkgo).